We begin with the raw amino-acid sequence, 358 residues long: Chorismate synthase (358 aa).

An NADP(+)-binding site is contributed by Arg-46. Residues 123–125 (RSS), 235–236 (NA), Gly-275, 290–294 (KPTPS), and Arg-316 each bind FMN.

It belongs to the chorismate synthase family. As to quaternary structure, homotetramer. FMNH2 is required as a cofactor.

It carries out the reaction 5-O-(1-carboxyvinyl)-3-phosphoshikimate = chorismate + phosphate. It functions in the pathway metabolic intermediate biosynthesis; chorismate biosynthesis; chorismate from D-erythrose 4-phosphate and phosphoenolpyruvate: step 7/7. Catalyzes the anti-1,4-elimination of the C-3 phosphate and the C-6 proR hydrogen from 5-enolpyruvylshikimate-3-phosphate (EPSP) to yield chorismate, which is the branch point compound that serves as the starting substrate for the three terminal pathways of aromatic amino acid biosynthesis. This reaction introduces a second double bond into the aromatic ring system. This Sulfurimonas denitrificans (strain ATCC 33889 / DSM 1251) (Thiomicrospira denitrificans (strain ATCC 33889 / DSM 1251)) protein is Chorismate synthase.